A 789-amino-acid chain; its full sequence is Polyribonucleotide nucleotidyltransferase (789 aa).

Residues Asp-494 and Asp-500 each coordinate Mg(2+). The 60-residue stretch at 561-620 (PRIESIFINKDKIRNVIGSGGKNIREICEKTGARVEIMQDGTVMIYAINNDAVEYAKNMI) folds into the KH domain. Residues 630–697 (GKVFDGTVIE…DREYVQLSMR (68 aa)) form the S1 motif domain. The disordered stretch occupies residues 709 to 789 (GELYNIRKTN…NEVPRKPRFF (81 aa)). A compositionally biased stretch (basic residues) spans 737-749 (SEKKRRGSGRSRR). A compositionally biased stretch (low complexity) spans 763–780 (NNGFGNGNRSFNDNRNGN).

This sequence belongs to the polyribonucleotide nucleotidyltransferase family. Mg(2+) is required as a cofactor.

It localises to the cytoplasm. The catalysed reaction is RNA(n+1) + phosphate = RNA(n) + a ribonucleoside 5'-diphosphate. Functionally, involved in mRNA degradation. Catalyzes the phosphorolysis of single-stranded polyribonucleotides processively in the 3'- to 5'-direction. The protein is Polyribonucleotide nucleotidyltransferase of Ehrlichia ruminantium (strain Welgevonden).